The following is an 879-amino-acid chain: Paramyosin, long form (879 aa).

A nonhelical region region spans residues 1-31 (MSSSQAVRSSKYSYRATSTGPGTADVNIEYI). At Ser-18 the chain carries Phosphoserine. The stretch at 32–858 (QDLSSLSRLE…IIRAKHRTFV (827 aa)) forms a coiled coil. Residues 859-879 (TTSTVPGSQVYIQETTRTITE) form a nonhelical region region.

This sequence belongs to the paramyosin family. In terms of assembly, heterodimer of two isoforms. In terms of processing, the more-acidic and less-abundant isoform is phosphorylated. Expressed in all larval and adult muscle tissues. Expression is five times higher in tubular than in fibrillar muscles.

It is found in the cytoplasm. The protein localises to the myofibril. Functionally, paramyosin is a major structural component of many thick filaments isolated from invertebrate muscles. The protein is Paramyosin, long form (Prm) of Drosophila melanogaster (Fruit fly).